The following is a 259-amino-acid chain: Leucine-rich repeat-containing protein 3B (259 aa).

The N-terminal stretch at 1–33 is a signal peptide; that stretch reads MNLVDLWLSRSLSMCLLLQSFVLMILCFHSASM. Residues 34 to 64 form the LRRNT domain; that stretch reads CPKGCLCSSSGGLNVTCSNANLKEIPRDLPP. Residue Asn-47 is glycosylated (N-linked (GlcNAc...) asparagine). LRR repeat units lie at residues 65–86, 89–110, and 114–135; these read ETVLLYLDSNQITSIPNEIFKD, QLRVLNLSKNGIEFIDEHAFKG, and TLQTLDLSDNRIQSVHKNAFNN. The N-linked (GlcNAc...) asparagine glycan is linked to Asn-94. One can recognise an LRRCT domain in the interval 145-197; the sequence is NPWHCDCTLQQVLRSMASNHETAHNVICKTSVLDEHAGRPFLNAANDADLCNL. Residues 205 to 225 form a helical membrane-spanning segment; it reads AMLVTMFGWFTMVISYVVYYV.

It belongs to the LRRC3 family.

It localises to the membrane. This is Leucine-rich repeat-containing protein 3B (Lrrc3b) from Mus musculus (Mouse).